A 121-amino-acid polypeptide reads, in one-letter code: NADH-ubiquinone oxidoreductase chain 3 (121 aa).

Transmembrane regions (helical) follow at residues 11–31, 63–83, and 90–110; these read ILIFFAISSLLSSVIFLLSYF, FYLVAILFLIFDLEISFLFPW, and ISIIGFWSMIVFLVILTIGFI.

It belongs to the complex I subunit 3 family.

It localises to the mitochondrion membrane. The catalysed reaction is a ubiquinone + NADH + 5 H(+)(in) = a ubiquinol + NAD(+) + 4 H(+)(out). Functionally, core subunit of the mitochondrial membrane respiratory chain NADH dehydrogenase (Complex I) that is believed to belong to the minimal assembly required for catalysis. Complex I functions in the transfer of electrons from NADH to the respiratory chain. The immediate electron acceptor for the enzyme is believed to be ubiquinone. The chain is NADH-ubiquinone oxidoreductase chain 3 (ND3) from Chondrus crispus (Carrageen Irish moss).